A 135-amino-acid chain; its full sequence is Helix-loop-helix protein 2 (135 aa).

The segment at 1-80 is disordered; that stretch reads MMLSPDQAAD…RRRATAKYRS (80 aa). Basic and acidic residues predominate over residues 10 to 21; it reads DSDHPSSAHSDP. Residues 68–80 show a composition bias toward basic residues; sequence KRRRRRATAKYRS. The region spanning 77–129 is the bHLH domain; sequence KYRSAHATRERIRVEAFNLAFAELRKLLPTLPPDKKLSKIEILRLAICYISYL.

In terms of assembly, homodimer. Interacts and may form heterodimers with STAT3.

The protein localises to the nucleus. Functionally, transcription factor which binds the E box motif 5'-CA[TC][AG]TG-3'. Involved in regulating energy expenditure, body mass, voluntary physical activity, mating behavior and reproductive longevity, acting through the hypothalamic-pituitary-gonadal axis. Acts as a transcriptional activator of target genes, including NDN, PCSK1, MC4R. Is also a transcriptional activator of KISS1. May act centrally to regulate function of both white and brown adipose tissue. Together with NHLH1, required to maintain migration and survival of cells in the anterior extramural migration stream (aes), which forms the precerebellar nuclei. Also, in concert with NHLH1, may determine fate of gonadotropin releasing hormone-1 (GnRH-1) neurons. This is Helix-loop-helix protein 2 (NHLH2) from Homo sapiens (Human).